A 241-amino-acid chain; its full sequence is Chaperone protein FimC (241 aa).

The N-terminal stretch at 1-36 (MSNKNVNVRKSQEITFCLLAGILMFMAMVVAGRAEA) is a signal peptide.

The protein belongs to the periplasmic pilus chaperone family.

The protein resides in the periplasm. Functionally, required for the biogenesis of type 1 fimbriae. Binds and interact with FimH. The sequence is that of Chaperone protein FimC (fimC) from Escherichia coli O6:H1 (strain CFT073 / ATCC 700928 / UPEC).